A 1037-amino-acid polypeptide reads, in one-letter code: Exportin-T (1037 aa).

This sequence belongs to the exportin family.

The protein localises to the nucleus. Its subcellular location is the cytoplasm. Functionally, tRNA nucleus export receptor which facilitates tRNA translocation across the nuclear pore complex. Involved in pre-tRNA splicing, probably by affecting the interaction of pre-tRNA with splicing endonuclease. The protein is Exportin-T (los1) of Neosartorya fischeri (strain ATCC 1020 / DSM 3700 / CBS 544.65 / FGSC A1164 / JCM 1740 / NRRL 181 / WB 181) (Aspergillus fischerianus).